Here is an 82-residue protein sequence, read N- to C-terminus: uncharacterized protein (82 aa).

This is an uncharacterized protein from Human herpesvirus 6A (strain Uganda-1102) (HHV-6 variant A).